Reading from the N-terminus, the 88-residue chain is Small ribosomal subunit protein bS18A (88 aa).

The protein belongs to the bacterial ribosomal protein bS18 family. As to quaternary structure, part of the 30S ribosomal subunit. Forms a tight heterodimer with protein bS6.

Binds as a heterodimer with protein bS6 to the central domain of the 16S rRNA, where it helps stabilize the platform of the 30S subunit. This Roseiflexus sp. (strain RS-1) protein is Small ribosomal subunit protein bS18A.